We begin with the raw amino-acid sequence, 26 residues long: Conotoxin Eb6.17 (26 aa).

Cystine bridges form between C7–C18 and C13–C25.

It belongs to the conotoxin O1 superfamily. As to expression, expressed by the venom duct.

It is found in the secreted. In Conus ebraeus (Hebrew cone), this protein is Conotoxin Eb6.17 (E1).